We begin with the raw amino-acid sequence, 184 residues long: ATP synthase subunit b, chloroplastic (184 aa).

Residues 27 to 49 traverse the membrane as a helical segment; it reads LATNPINLSVVLGVLIFFGKGVL.

This sequence belongs to the ATPase B chain family. As to quaternary structure, F-type ATPases have 2 components, F(1) - the catalytic core - and F(0) - the membrane proton channel. F(1) has five subunits: alpha(3), beta(3), gamma(1), delta(1), epsilon(1). F(0) has four main subunits: a(1), b(1), b'(1) and c(10-14). The alpha and beta chains form an alternating ring which encloses part of the gamma chain. F(1) is attached to F(0) by a central stalk formed by the gamma and epsilon chains, while a peripheral stalk is formed by the delta, b and b' chains.

Its subcellular location is the plastid. It is found in the chloroplast thylakoid membrane. In terms of biological role, f(1)F(0) ATP synthase produces ATP from ADP in the presence of a proton or sodium gradient. F-type ATPases consist of two structural domains, F(1) containing the extramembraneous catalytic core and F(0) containing the membrane proton channel, linked together by a central stalk and a peripheral stalk. During catalysis, ATP synthesis in the catalytic domain of F(1) is coupled via a rotary mechanism of the central stalk subunits to proton translocation. Component of the F(0) channel, it forms part of the peripheral stalk, linking F(1) to F(0). In Citrus sinensis (Sweet orange), this protein is ATP synthase subunit b, chloroplastic.